A 382-amino-acid chain; its full sequence is uncharacterized protein (382 aa).

A run of 12 helical transmembrane segments spans residues 14-34 (GLLL…LWLA), 45-65 (VVSS…GYVI), 79-99 (FIFA…SWLA), 102-122 (FVAG…LMCS), 131-151 (LLAA…LLVS), 157-177 (LMSV…PLLF), 204-224 (LGVN…GLMP), 235-255 (ASIG…QWPI), 270-290 (VQVF…AMAP), 291-311 (ALFI…AWAC), 325-345 (ALLL…AMLM), and 348-368 (FSDN…LLML).

The protein belongs to the major facilitator superfamily. YcaD (TC 2.A.1.26) family.

Its subcellular location is the cell inner membrane. This is an uncharacterized protein from Shigella flexneri serotype 5b (strain 8401).